The chain runs to 521 residues: Bifunctional purine biosynthesis protein PurH (521 aa).

In terms of domain architecture, MGS-like spans 1–149 (MSDPVIKRAL…KNNESVTVVT (149 aa)).

Belongs to the PurH family.

The enzyme catalyses (6R)-10-formyltetrahydrofolate + 5-amino-1-(5-phospho-beta-D-ribosyl)imidazole-4-carboxamide = 5-formamido-1-(5-phospho-D-ribosyl)imidazole-4-carboxamide + (6S)-5,6,7,8-tetrahydrofolate. It carries out the reaction IMP + H2O = 5-formamido-1-(5-phospho-D-ribosyl)imidazole-4-carboxamide. It functions in the pathway purine metabolism; IMP biosynthesis via de novo pathway; 5-formamido-1-(5-phospho-D-ribosyl)imidazole-4-carboxamide from 5-amino-1-(5-phospho-D-ribosyl)imidazole-4-carboxamide (10-formyl THF route): step 1/1. The protein operates within purine metabolism; IMP biosynthesis via de novo pathway; IMP from 5-formamido-1-(5-phospho-D-ribosyl)imidazole-4-carboxamide: step 1/1. The polypeptide is Bifunctional purine biosynthesis protein PurH (Chlorobium phaeobacteroides (strain DSM 266 / SMG 266 / 2430)).